Consider the following 443-residue polypeptide: MNEIKGIERAVQVEVPRPRFLLLAFTDINGSLKGMEIPMERYEEAVEDGVSFDGSSIPGFEGIEDSDLIFKADPSTYAEIPWEGIGRVYGYIYKGDEPYQADPRGILKRVLERLEKEGLKAHIGPEPEFYIFKKNGTWELHIPDSGGYFDLVGLDKAREIRREIALYMPYLGLKPEVLHHEVGKAQHEIDFRYDEALRTADNIVSFKHVVKAVAELHGYYATFMPKPIYGFPGNGMHLHISLWKDGENVFIGEDGLSDTALHFIGGILKHAKALAALTNPTVNSYKRLVPGYEAPVYISWGYRNRSALIRVPAFKGSGARIEYRCPDPSANPYLALAGILMVGLDGIKKKVEPDSYVETNVYEMDDAERERLGIDTLPGSLGEALEELKKDKTVREALGGAYKNFIDYKEREWEEYIEYLSSRDIPIDTKKVTEWELERYFYV.

Residues 11–97 (VQVEVPRPRF…VYGYIYKGDE (87 aa)) enclose the GS beta-grasp domain. One can recognise a GS catalytic domain in the interval 103-443 (PRGILKRVLE…EWELERYFYV (341 aa)). The Mg(2+) site is built by Glu126 and Glu128. Position 176 (Glu176) interacts with ATP. 2 residues coordinate Mg(2+): Glu181 and Glu188. Gly233 lines the L-glutamate pocket. His237 contacts Mg(2+). ATP contacts are provided by residues 239–241 (HIS) and Ser241. Residues Arg287, Glu293, and Arg305 each coordinate L-glutamate. Positions 305 and 310 each coordinate ATP. Position 322 (Glu322) interacts with Mg(2+). Residue Arg324 coordinates L-glutamate.

Belongs to the glutamine synthetase family. Oligomer of 12 subunits arranged in the form of two hexagons. The cofactor is Mg(2+). It depends on Mn(2+) as a cofactor.

The protein localises to the cytoplasm. The catalysed reaction is L-glutamate + NH4(+) + ATP = L-glutamine + ADP + phosphate + H(+). The enzyme catalyses hydroxylamine + L-glutamate + ATP = L-glutamine hydroxamate + ADP + phosphate. With respect to regulation, the activity of this enzyme is not controlled by adenylation. Its function is as follows. Carries out the ATP-dependent synthesis of glutamine from ammonium nitrogen and glutamate. Exhibits both L-gamma-glutamylhydroxamate synthetase and gamma-glutamyltransferase activities when using hydroxylamine as substrate; in fact, the enzyme possesses low biosynthetic activity, suggesting that the reaction is biased towards the degradation of glutamine under ammonia-rich conditions. Might play some role in ammonia assimilation under ammonia-starvation conditions. Can also use GTP instead of ATP in the synthetase reaction, but not CTP or UTP. This is Glutamine synthetase from Thermococcus kodakarensis (strain ATCC BAA-918 / JCM 12380 / KOD1) (Pyrococcus kodakaraensis (strain KOD1)).